A 298-amino-acid chain; its full sequence is Acetylglutamate kinase (298 aa).

Substrate is bound by residues 69–70 (GG), arginine 91, and asparagine 196.

This sequence belongs to the acetylglutamate kinase family. ArgB subfamily.

It is found in the cytoplasm. The enzyme catalyses N-acetyl-L-glutamate + ATP = N-acetyl-L-glutamyl 5-phosphate + ADP. It participates in amino-acid biosynthesis; L-arginine biosynthesis; N(2)-acetyl-L-ornithine from L-glutamate: step 2/4. Catalyzes the ATP-dependent phosphorylation of N-acetyl-L-glutamate. The polypeptide is Acetylglutamate kinase (Bradyrhizobium sp. (strain BTAi1 / ATCC BAA-1182)).